A 221-amino-acid chain; its full sequence is Uracil-DNA glycosylase (221 aa).

Residue aspartate 64 is the Proton acceptor of the active site.

The protein belongs to the uracil-DNA glycosylase (UDG) superfamily. UNG family.

The protein resides in the cytoplasm. It catalyses the reaction Hydrolyzes single-stranded DNA or mismatched double-stranded DNA and polynucleotides, releasing free uracil.. Functionally, excises uracil residues from the DNA which can arise as a result of misincorporation of dUMP residues by DNA polymerase or due to deamination of cytosine. This is Uracil-DNA glycosylase from Mycoplasmopsis pulmonis (strain UAB CTIP) (Mycoplasma pulmonis).